Consider the following 200-residue polypeptide: Peptidyl-tRNA hydrolase (200 aa).

Y15 provides a ligand contact to tRNA. H20 acts as the Proton acceptor in catalysis. Residues F66, N68, and N114 each contribute to the tRNA site.

This sequence belongs to the PTH family. As to quaternary structure, monomer.

It localises to the cytoplasm. It catalyses the reaction an N-acyl-L-alpha-aminoacyl-tRNA + H2O = an N-acyl-L-amino acid + a tRNA + H(+). Hydrolyzes ribosome-free peptidyl-tRNAs (with 1 or more amino acids incorporated), which drop off the ribosome during protein synthesis, or as a result of ribosome stalling. Functionally, catalyzes the release of premature peptidyl moieties from peptidyl-tRNA molecules trapped in stalled 50S ribosomal subunits, and thus maintains levels of free tRNAs and 50S ribosomes. In Ralstonia pickettii (strain 12J), this protein is Peptidyl-tRNA hydrolase.